We begin with the raw amino-acid sequence, 238 residues long: ATP synthase subunit a (238 aa).

5 consecutive transmembrane segments (helical) span residues 18-38, 75-95, 112-132, 179-199, and 203-223; these read LTIL…VFWA, YSLL…LGLM, NFGV…IEGI, VVTG…PLAF, and IVWT…FIIL.

This sequence belongs to the ATPase A chain family. In terms of assembly, F-type ATPases have 2 components, CF(1) - the catalytic core - and CF(0) - the membrane proton channel. CF(1) has five subunits: alpha(3), beta(3), gamma(1), delta(1), epsilon(1). CF(0) has three main subunits: a(1), b(2) and c(9-12). The alpha and beta chains form an alternating ring which encloses part of the gamma chain. CF(1) is attached to CF(0) by a central stalk formed by the gamma and epsilon chains, while a peripheral stalk is formed by the delta and b chains.

The protein localises to the cell membrane. Its function is as follows. Key component of the proton channel; it plays a direct role in the translocation of protons across the membrane. The sequence is that of ATP synthase subunit a from Streptococcus agalactiae serotype Ia (strain ATCC 27591 / A909 / CDC SS700).